A 468-amino-acid chain; its full sequence is Citrate synthase, mitochondrial (468 aa).

A mitochondrion-targeting transit peptide spans 1–30; the sequence is MSFLSISRLAPRLLSSKNAACVVVAARNAS. Active-site residues include His-303 and His-349. Arg-358 lines the oxaloacetate pocket. The active site involves Asp-404. Residues Arg-430 and Arg-450 each coordinate oxaloacetate.

Belongs to the citrate synthase family. Homodimer.

Its subcellular location is the mitochondrion matrix. It catalyses the reaction oxaloacetate + acetyl-CoA + H2O = citrate + CoA + H(+). It functions in the pathway carbohydrate metabolism; tricarboxylic acid cycle; isocitrate from oxaloacetate: step 1/2. Its function is as follows. Key enzyme of the Krebs tricarboxylic acid cycle which catalyzes the synthesis of citrate from acetyl coenzyme A and oxaloacetate. This chain is Citrate synthase, mitochondrial (cs), found in Danio rerio (Zebrafish).